A 623-amino-acid polypeptide reads, in one-letter code: Prothrombin (623 aa).

The N-terminal stretch at 1–24 (MAHVRGLQLPGCLALAALCTLVHS) is a signal peptide. Residues 25–43 (QHVFLAPQQALSLLQRVRR) constitute a propeptide that is removed on maturation. The Gla domain occupies 44 to 90 (ANSVFLEEVRKGNLERECVEETCSYEEAFEALESSTATDVFWAKYTA). 4-carboxyglutamate occurs at positions 50, 51, 58, 60, 63, 64, 69, 70, 73, and 76. A disulfide bond links Cys61 and Cys66. 11 cysteine pairs are disulfide-bonded: Cys91-Cys104, Cys109-Cys187, Cys130-Cys170, Cys158-Cys182, Cys214-Cys292, Cys235-Cys275, Cys263-Cys287, Cys337-Cys483, Cys392-Cys408, Cys537-Cys551, and Cys565-Cys595. Kringle domains are found at residues 108 to 187 (NCAE…IPVC) and 213 to 292 (QCVP…LNYC). N-linked (GlcNAc...) asparagine glycosylation is found at Asn122 and Asn144. The Peptidase S1 domain maps to 365 to 619 (IVEGSDAEIG…LKKWIQKVID (255 aa)). His407 (charge relay system) is an active-site residue. Asn417 is a glycosylation site (N-linked (GlcNAc...) asparagine). Residue Asp463 is the Charge relay system of the active site. The high affinity receptor-binding region which also known as the TP508 peptide stretch occupies residues 552-574 (AGYKPDEGKRGDACEGDSGGPFV). Ser569 acts as the Charge relay system in catalysis.

It belongs to the peptidase S1 family. In terms of assembly, heterodimer (named alpha-thrombin) of a light and a heavy chain; disulfide-linked. Forms a heterodimer with SERPINA5. In plasma, interacts (via N-terminus) with alpha-1-microglobulin; this interaction does not prevent the activation of prothrombin to thrombin. Post-translationally, the gamma-carboxyglutamyl residues, which bind calcium ions, result from the carboxylation of glutamyl residues by a microsomal enzyme, the vitamin K-dependent carboxylase. The modified residues are necessary for the calcium-dependent interaction with a negatively charged phospholipid surface, which is essential for the conversion of prothrombin to thrombin. In the penultimate step of the coagulation cascade, prothrombin is converted to thrombin by the prothrombinase complex composed of factor Xa (F10), cofactor Va (F5), and phospholipids. This activation requires factor Xa-catalyzed sequential cleavage at 2 sites, Arg-315 and Arg-364, along 2 possible pathways. In the first pathway, the first cleavage occurs at Arg-315, leading to the formation of the inactive intermediate prethrombin-2. This pathway preferentially occurs on platelets and in the absence of cofactor Va. In the second pathway, the first cleavage occurs at Arg-364, which separates protease domain into 2 chains that remain connected through a disulfide bond and generates the active intermediate meizothrombin. The presence of cofactor Va directs activation along the meizothrombin pathway and greatly accelerates the rate of cleavage at Arg-364, but has a smaller effect on the cleavage of meizothrombin at Arg-315. Meizothrombin accumulates as an intermediate when prothrombinase is assembled on the membrane of red blood cells.

It carries out the reaction Selective cleavage of Arg-|-Gly bonds in fibrinogen to form fibrin and release fibrinopeptides A and B.. With respect to regulation, activity is promoted in the presence of negatively charged surfaces, such as polyphosphate and dextran sulfate. Inhibited by SERPINA5. Functionally, thrombin, which cleaves bonds after Arg and Lys, converts fibrinogen to fibrin and activates factors V, VII, VIII, XIII, and, in complex with thrombomodulin, protein C. Functions in blood homeostasis, inflammation and wound healing. Activates coagulation factor XI (F11); activation is promoted by the contact with negatively charged surfaces. Triggers the production of pro-inflammatory cytokines, such as MCP-1/CCL2 and IL8/CXCL8, in endothelial cells. This is Prothrombin (F2) from Pongo abelii (Sumatran orangutan).